Here is a 122-residue protein sequence, read N- to C-terminus: Large ribosomal subunit protein uL18 (122 aa).

Belongs to the universal ribosomal protein uL18 family. Part of the 50S ribosomal subunit; part of the 5S rRNA/L5/L18/L25 subcomplex. Contacts the 5S and 23S rRNAs.

This is one of the proteins that bind and probably mediate the attachment of the 5S RNA into the large ribosomal subunit, where it forms part of the central protuberance. In Buchnera aphidicola subsp. Acyrthosiphon pisum (strain 5A), this protein is Large ribosomal subunit protein uL18.